A 250-amino-acid polypeptide reads, in one-letter code: Small ribosomal subunit protein uS3 (250 aa).

A KH type-2 domain is found at 39-107; that stretch reads VREFLTKKLK…PAQVSINEID (69 aa). Positions 215-250 are disordered; that stretch reads MNPAPAEERPAKRGRGRGEGQERRGRRGDRAADKGE. Residues 220–250 show a composition bias toward basic and acidic residues; sequence AEERPAKRGRGRGEGQERRGRRGDRAADKGE.

This sequence belongs to the universal ribosomal protein uS3 family. As to quaternary structure, part of the 30S ribosomal subunit. Forms a tight complex with proteins S10 and S14.

Binds the lower part of the 30S subunit head. Binds mRNA in the 70S ribosome, positioning it for translation. The sequence is that of Small ribosomal subunit protein uS3 from Acinetobacter baumannii (strain AB307-0294).